We begin with the raw amino-acid sequence, 263 residues long: uncharacterized protein (263 aa).

Residues 1–22 (MEYLKRLALFISVIILTIFIMG) form the signal peptide. The N-palmitoyl cysteine moiety is linked to residue C23. Residue C23 is the site of S-diacylglycerol cysteine attachment.

This sequence belongs to the staphylococcal tandem lipoprotein family.

It localises to the cell membrane. This is an uncharacterized protein from Staphylococcus aureus (strain MSSA476).